A 142-amino-acid chain; its full sequence is Large ribosomal subunit protein uL13 (142 aa).

Belongs to the universal ribosomal protein uL13 family. Part of the 50S ribosomal subunit.

Functionally, this protein is one of the early assembly proteins of the 50S ribosomal subunit, although it is not seen to bind rRNA by itself. It is important during the early stages of 50S assembly. The polypeptide is Large ribosomal subunit protein uL13 (Delftia acidovorans (strain DSM 14801 / SPH-1)).